The chain runs to 978 residues: Receptor like protein 21 (978 aa).

An N-terminal signal peptide occupies residues methionine 1–glycine 27. The Extracellular segment spans residues cysteine 28 to methionine 930. Asparagine 64, asparagine 79, asparagine 102, asparagine 116, and asparagine 155 each carry an N-linked (GlcNAc...) asparagine glycan. LRR repeat units follow at residues leucine 141–serine 167, threonine 169–aspartate 189, leucine 190–leucine 213, lysine 214–asparagine 237, leucine 238–lysine 262, lysine 264–leucine 287, lysine 288–serine 310, glutamate 312–asparagine 335, threonine 337–proline 361, asparagine 362–glutamine 385, lysine 386–asparagine 409, asparagine 410–valine 432, histidine 433–alanine 455, proline 457–methionine 480, lysine 481–glycine 504, valine 506–phenylalanine 529, proline 530–serine 553, threonine 554–phenylalanine 577, tyrosine 579–methionine 601, proline 602–glutamate 625, glycine 627–leucine 646, lysine 647–serine 671, asparagine 673–leucine 693, serine 694–asparagine 716, leucine 788–aspartate 811, leucine 812–lysine 835, isoleucine 837–serine 859, and leucine 860–threonine 885. N-linked (GlcNAc...) asparagine glycosylation occurs at asparagine 204. Asparagine 335 is a glycosylation site (N-linked (GlcNAc...) asparagine). Asparagine 397 and asparagine 420 each carry an N-linked (GlcNAc...) asparagine glycan. N-linked (GlcNAc...) asparagine glycosylation is found at asparagine 463, asparagine 482, and asparagine 492. Asparagine 552 carries an N-linked (GlcNAc...) asparagine glycan. Asparagine 636 is a glycosylation site (N-linked (GlcNAc...) asparagine). Residues asparagine 681 and asparagine 716 are each glycosylated (N-linked (GlcNAc...) asparagine). Residue asparagine 819 is glycosylated (N-linked (GlcNAc...) asparagine). Asparagine 872 is a glycosylation site (N-linked (GlcNAc...) asparagine). Positions threonine 902 to glutamate 922 are disordered. A helical membrane pass occupies residues methionine 931–leucine 951. Residues methionine 952–proline 978 lie on the Cytoplasmic side of the membrane.

It belongs to the RLP family.

It is found in the cell membrane. The sequence is that of Receptor like protein 21 from Arabidopsis thaliana (Mouse-ear cress).